Here is a 672-residue protein sequence, read N- to C-terminus: Tubulin--tyrosine ligase-like protein 12 (672 aa).

The region spanning 332 to 670 is the TTL domain; the sequence is KIKIFLQIFA…LDEIDPTKVT (339 aa). ATP-binding positions include 480–483, Lys499, and Asp501; that span reads CEYI.

Belongs to the tubulin--tyrosine ligase family.

Regulates microtubule dynamics in uterine muscle cells. The protein is Tubulin--tyrosine ligase-like protein 12 of Caenorhabditis briggsae.